The following is a 212-amino-acid chain: Small ribosomal subunit protein uS19m (212 aa).

Residues 1–29 (MAFCTKLGGHWKQGVNVPVSSMLGSLRYM) constitute a mitochondrion transit peptide. The 79-residue stretch at 31–109 (TKLYIGGLSP…FNISVNVAKD (79 aa)) folds into the RRM domain.

Belongs to the universal ribosomal protein uS19 family. As to quaternary structure, component of the mitochondrial ribosome small subunit.

The protein resides in the mitochondrion. In terms of biological role, the RNA-binding domain found in RPS19 may functionally replace the missing mitochondrial RPS13. This Arabidopsis thaliana (Mouse-ear cress) protein is Small ribosomal subunit protein uS19m (RPS19).